Reading from the N-terminus, the 525-residue chain is Serine/threonine-protein kinase YPK3 (525 aa).

2 positions are modified to phosphoserine: serine 90 and serine 105. Threonine 107 carries the post-translational modification Phosphothreonine. The Protein kinase domain occupies 128 to 424 (FKPVRVLGQG…KTGANNKPTK (297 aa)). ATP is bound by residues 134 to 142 (LGQGAYGKV) and lysine 157. Residues 170–193 (ATDSKREDEDKNDGNNNDNDDGLS) are disordered. Residues 172–182 (DSKREDEDKND) show a composition bias toward basic and acidic residues. Aspartate 277 (proton acceptor) is an active-site residue. Serine 321 carries the post-translational modification Phosphoserine; by PKH1 or PKH2. An AGC-kinase C-terminal domain is found at 445-524 (RKIDWKLLES…KASGSYLEKY (80 aa)). Residue threonine 490 is modified to Phosphothreonine; by TORC1. A Phosphoserine; by TORC1 modification is found at serine 513.

It belongs to the protein kinase superfamily. AGC Ser/Thr protein kinase family. S6 kinase subfamily. In terms of processing, phosphorylated by PKA in a TORC1-dependent manner. Phosphorylation at PKA consensus sites RRxS/T decreases upon rapamycin treatment.

The protein resides in the cytoplasm. The enzyme catalyses L-seryl-[protein] + ATP = O-phospho-L-seryl-[protein] + ADP + H(+). It carries out the reaction L-threonyl-[protein] + ATP = O-phospho-L-threonyl-[protein] + ADP + H(+). In terms of biological role, AGC kinase which plays a role in TOR complex 1 (TORC1) signaling pathway which mediates temporal control of cell growth in response to nutrients. Required for phosphorylation of ribosomal protein S6 (RPS6A/RPS6B) at 'Ser-232' and 'Ser-233'. The sequence is that of Serine/threonine-protein kinase YPK3 from Saccharomyces cerevisiae (strain ATCC 204508 / S288c) (Baker's yeast).